Here is a 453-residue protein sequence, read N- to C-terminus: Secreted aspartic protease 10 (453 aa).

A signal peptide spans 1 to 20 (MDLVIMNFVFLLYLTSVVKC). Positions 52 to 372 (YTTELEIGSN…DLQDMTISVA (321 aa)) constitute a Peptidase A1 domain. Asp-70 is an active-site residue. 70 to 72 (DTG) contacts pepstatin A. A disulfide bridge links Cys-85 with Cys-112. Residues Asn-115 and Asn-128 are each glycosylated (N-linked (GlcNAc...) asparagine). 138–139 (VD) is a binding site for pepstatin A. N-linked (GlcNAc...) asparagine glycans are attached at residues Asn-168, Asn-208, Asn-211, and Asn-245. Residue Asp-266 is part of the active site. Residue 266 to 270 (DTGST) coordinates pepstatin A. Asn-287 is a glycosylation site (N-linked (GlcNAc...) asparagine). Cys-301 and Cys-333 are joined by a disulfide. The tract at residues 387–432 (NPNEDQNEVPTSTSFTQSASSSGSQPSSTISGENMDKNTTSSSSGN) is disordered. Residues 397–417 (TSTSFTQSASSSGSQPSSTIS) are compositionally biased toward low complexity. The segment covering 423–432 (KNTTSSSSGN) has biased composition (polar residues). An N-linked (GlcNAc...) asparagine glycan is attached at Asn-424. Ser-429 is lipidated: GPI-anchor amidated serine. The propeptide at 430-453 (SGNCQTRSWIAILSALFLVYIHII) is removed in mature form.

The protein belongs to the peptidase A1 family. The GPI-anchor is attached to the protein in the endoplasmic reticulum and serves to target the protein to the cell surface. There, the glucosamine-inositol phospholipid moiety is cleaved off and the GPI-modified mannoprotein is covalently attached via its lipidless GPI glycan remnant to the 1,6-beta-glucan of the outer cell wall layer.

The protein resides in the secreted. It is found in the cell membrane. The catalysed reaction is Preferential cleavage at the carboxyl of hydrophobic amino acids, but fails to cleave 15-Leu-|-Tyr-16, 16-Tyr-|-Leu-17 and 24-Phe-|-Phe-25 of insulin B chain. Activates trypsinogen, and degrades keratin.. Its function is as follows. Secreted aspartic peptidases (SAPs) are a group of ten acidic hydrolases considered as key virulence factors. These enzymes supply the fungus with nutrient amino acids as well as are able to degrade the selected host's proteins involved in the immune defense. Required for cell surface integrity and cell separation during budding. This is Secreted aspartic protease 10 from Candida albicans (strain SC5314 / ATCC MYA-2876) (Yeast).